The sequence spans 80 residues: Teretoxin Tan6.1 (80 aa).

The signal sequence occupies residues 1 to 21; that stretch reads MATSGRLLCLCLVLGLVFESL. The propeptide occupies 22–34; the sequence is GHPGARLPKDGKR.

The protein belongs to the teretoxin M (TM) superfamily. Contains 3 disulfide bonds. In terms of tissue distribution, expressed by the venom duct.

The protein resides in the secreted. The polypeptide is Teretoxin Tan6.1 (Terebra anilis (Auger snail)).